A 1396-amino-acid chain; its full sequence is Sterol 3-beta-glucosyltransferase (1396 aa).

Residues 1–16 (MRPLLDEAKRRVDRRL) show a composition bias toward basic and acidic residues. 3 disordered regions span residues 1–59 (MRPL…TKEG), 82–193 (HARF…AAPV), and 206–233 (SKGS…TSAS). Over residues 18-28 (ASRQSLSTSRI) the composition is skewed to polar residues. Basic and acidic residues-rich tracts occupy residues 35–44 (ERLKDDHDAQ) and 82–108 (HARF…KESQ). Positions 156 to 175 (GSSQRQGGAQTEPSTGNQMS) are enriched in polar residues. In terms of domain architecture, GRAM 1 spans 237–288 (LRLMEMFGFESPEKVLVEYACSLVQSMLLQGYMYVTEGHICFYAYLPRKSTV). The PH domain occupies 289 to 387 (AIKSGYLYKR…WVKSLQKVIF (99 aa)). 2 stretches are compositionally biased toward polar residues: residues 459–479 (QAKN…QSRA) and 487–497 (SLTSGLSQVLG). 2 disordered regions span residues 459–531 (QAKN…RDLS) and 576–635 (FRRQ…VQQS). Residues 585–595 (QFGRRHSDETA) are compositionally biased toward basic and acidic residues. Residues 719–785 (DRFRAHFALP…KDVENVEKEK (67 aa)) form the GRAM 2 domain. The interval 841–880 (EQDESEAAKAEHRMLQEARKDASGGLIPQTPSDESPEIHP) is disordered. A compositionally biased stretch (basic and acidic residues) spans 846–862 (EAAKAEHRMLQEARKDA). 10 residues coordinate UDP-alpha-D-glucose: Ser-907, Arg-908, Asp-910, Ala-1210, His-1212, His-1225, Gly-1229, Thr-1230, Asp-1249, and Gln-1250.

It belongs to the glycosyltransferase 28 family.

The protein resides in the cytoplasm. It localises to the preautophagosomal structure membrane. It carries out the reaction a sterol + UDP-alpha-D-glucose = a sterol 3-beta-D-glucoside + UDP + H(+). The enzyme catalyses ergosterol + UDP-alpha-D-glucose = ergosteryl 3-beta-D-glucoside + UDP + H(+). Sterol glycosyltransferase responsible for the glycosylation of ergosterol to form ergosterol-glucoside. The chain is Sterol 3-beta-glucosyltransferase from Aspergillus terreus (strain NIH 2624 / FGSC A1156).